A 906-amino-acid chain; its full sequence is Transmembrane channel-like protein 2 (906 aa).

Residues 1–150 (MSHQVKGLKE…SASGGESLSE (150 aa)) form a disordered region. At 1–263 (MSHQVKGLKE…IFLRWMYGVN (263 aa)) the chain is on the cytoplasmic side. Positions 69–79 (PRRKQTGRRRH) are enriched in basic residues. Over residues 80-127 (REELGEQERGEAERTCEGRRKRDERASFQERTAAPKREKEIPRREEKS) the composition is skewed to basic and acidic residues. Over residues 135–147 (SSSLASSASGGES) the composition is skewed to low complexity. A helical membrane pass occupies residues 264–284 (LVLFGLIFGLVIIPEVLMGMP). At 285–336 (YGSIPRKTVPRAEEEKAMDFSVLWDFEGYIKYSALFYGYYNNQRTIGWLRYR) the chain is on the extracellular side. A helical transmembrane segment spans residues 337-357 (LPMAYFMVGVSVFGYSLIIVI). Topologically, residues 358–431 (RSMASNTQGS…NIHLTRFLRV (74 aa)) are cytoplasmic. Residues 432–452 (LANFLIICCLCGSGYLIYFVV) form a helical membrane-spanning segment. Residues 453–508 (KRSQQFSKMQNVSWYERNEVEIVMSLLGMFCPPLFETIAALENYHPRTGLKWQLGR) lie on the Extracellular side of the membrane. The chain crosses the membrane as a helical span at residues 509 to 529 (IFALFLGNLYTFLLALMDDVH). Over 530 to 693 (LKLANEETIK…RVFKASRSNN (164 aa)) the chain is Cytoplasmic. The helical transmembrane segment at 694-714 (FYMGLLLLVLFLSLLPVAYTI) threads the bilayer. Topologically, residues 715–750 (MSLPPSFDCGPFSGKNRMYDVLQETIENDFPTFLGK) are extracellular. A helical membrane pass occupies residues 751–771 (IFAFLANPGLIIPAILLMFLA). The Cytoplasmic segment spans residues 772–906 (IYYLNSVSKS…SGKSAQRPPH (135 aa)). A disordered region spans residues 800–906 (EKSHKSVKGK…SGKSAQRPPH (107 aa)). Composition is skewed to polar residues over residues 820–846 (KSSS…QSQA), 854–866 (PGTS…TTLP), and 886–900 (APSQ…SGKS).

Belongs to the TMC family. As to quaternary structure, forms the MET channel composed of TMC dimer (TMC1 or TMC2), TMIE, TOMT, CIB (CIB2 or CIB3), LHFPL5 and PDH15. The interaction of TMC1 and TMC2 with TOMT is required for the transportation of TMC1/2 into the stereocilia of hair cells. Interacts (via N-terminus) with both isoforms CD1 and CD3 of PCDH15. Can form a heterodimer with TMC1, TMC5 or TMC7. In terms of tissue distribution, detected in fetal cochlea.

It localises to the cell membrane. The catalysed reaction is Ca(2+)(in) = Ca(2+)(out). Pore-forming subunit of the mechanotransducer (MET) non-selective cation channel complex located at the tips of stereocilia of cochlear hair cells and that mediates sensory transduction in the auditory system. The MET complex is composed of two dimeric pore-forming ion-conducting transmembrane TMC (TMC1 or TMC2) subunits, and aided by several auxiliary proteins including LHFPL5, TMIE, CIB2/3 and TOMT, and the tip-link PCDH15. MET channel is activated by tension in the tip-link extending from the side wall of one stereocilium to the tip of the adjacent shorter stereocilium, where the channel is located. TMC2 MET channel is highly permeable to calcium and likely transports monovalent cations. Also involved in vestibular hair cell transduction current of the mammalian inner ear. The polypeptide is Transmembrane channel-like protein 2 (Homo sapiens (Human)).